The chain runs to 465 residues: Ras GTPase-activating protein-binding protein 1 (465 aa).

The NTF2 domain maps to 11–133; it reads VGREFVRQYY…FYVHNDIFRY (123 aa). Residues K36, K50, K59, K64, K76, and K123 each participate in a glycyl lysine isopeptide (Lys-Gly) (interchain with G-Cter in ubiquitin) cross-link. The segment at 142 to 224 is acidic disordered region; the sequence is ITEPQEESEE…EPVLEETAPE (83 aa). T143 is subject to Phosphothreonine. Composition is skewed to acidic residues over residues 145–157 and 184–205; these read PQEE…EEPE and EHLE…EQEP. The tract at residues 145–242 is disordered; sequence PQEESEEEVE…APADIAQTVQ (98 aa). A Phosphoserine modification is found at S149. 4 positions are modified to phosphoserine: S230, S231, S249, and S252. A disordered region spans residues 254 to 326; the sequence is TSKNLPPSGA…PVREAGEQGD (73 aa). Basic and acidic residues-rich tracts occupy residues 296–306 and 317–326; these read PQRDQRVREQR and PVREAGEQGD. In terms of domain architecture, RRM spans 339–414; it reads HQLFIGNLPH…VRLNVEEKKT (76 aa). Glycyl lysine isopeptide (Lys-Gly) (interchain with G-Cter in ubiquitin) cross-links involve residues K352 and K356. S372 is subject to Phosphoserine. Residue K375 forms a Glycyl lysine isopeptide (Lys-Gly) (interchain with G-Cter in ubiquitin) linkage. Position 375 is an N6-acetyllysine; alternate (K375). Residue K375 forms a Glycyl lysine isopeptide (Lys-Gly) (interchain with G-Cter in SUMO2); alternate linkage. K392 participates in a covalent cross-link: Glycyl lysine isopeptide (Lys-Gly) (interchain with G-Cter in ubiquitin); alternate. Residues 409-465 are RG-rich region; it reads VEEKKTRAAREGDRRDNRLRGPGGPRGGLGGGMRGPPRGGMVQKPGFGVGRSIAPRQ. Residues 412-427 show a composition bias toward basic and acidic residues; the sequence is KKTRAAREGDRRDNRL. The tract at residues 412–465 is disordered; sequence KKTRAAREGDRRDNRLRGPGGPRGGLGGGMRGPPRGGMVQKPGFGVGRSIAPRQ. R428 carries the post-translational modification Asymmetric dimethylarginine. Residues 429–446 are compositionally biased toward gly residues; the sequence is GPGGPRGGLGGGMRGPPR. Position 434 is an asymmetric dimethylarginine; alternate (R434). An omega-N-methylarginine; alternate mark is found at R434, R446, R459, and R464. R459 carries the dimethylated arginine; alternate modification.

Homodimer and oligomer. Component of a TAU mRNP complex, at least composed of IGF2BP1, ELAVL4 and G3BP1. Binds to the SH3 domain of Ras GTPase-activating protein (RASA1) in proliferating cells. No interaction in quiescent cells. Interacts (via NTF2 domain) with USP10; inhibiting stress granule formation by lowering G3BP1 valence. Interacts (via NTF2 domain) with CAPRIN1; promoting stress granule formation by lowering the saturation-concentration of G3BP1. Interacts (via NTF2 domain) with UBAP2L; promoting stress granule formation. Associates (via RG-rich region) with 40S ribosome subunits. Interacts with RPTOR and SPAG5; this complex is increased by oxidative stress. Interacts with ATXN2L. Interacts with STYXL1. Interacts with CGAS (via N-terminus); this interaction promotes the DNA-binding and activation of CGAS. Interacts (via C-terminus) with RIGI. Interacts with PABPC1. Interacts with QKI (isoforms QKI6 and QKI7); directing N(7)-methylguanine-containing mRNAs to stress granules. The cofactor is Mg(2+). Post-translationally, phosphorylation of the acidic disordered region regulates stress granule assembly. RASA1-dependent phosphorylation of Ser-149 induces a conformational change that prevents self-association. Dephosphorylation after HRAS activation is required for stress granule assembly. Ser-149 phosphorylation induces partial nuclear localization. Arg-435 is dimethylated, probably to asymmetric dimethylarginine. In terms of processing, ubiquitinated by TRIM21 via 'Lys-63'-linked polyubiquitination in the NTF2 domain in response to heat shock, leading to stress granule disassembly: ubiquitination promotes interaction with the FAF2 adapter, followed by interaction with VCP, which extracts G3BP1 from stress granules, leading to stress granule disassembly. In case of prolonged stress, ubiquitination by TRIM21 leads to autophagy-dependent degradation of G3BP1 via recruitment of ubiquitinated G3BP1 by SQSTM1 and/or CALCOCO2 to autophagosomes.

The protein localises to the cytoplasm. It localises to the cytosol. The protein resides in the perikaryon. It is found in the stress granule. Its subcellular location is the nucleus. The enzyme catalyses ATP + H2O = ADP + phosphate + H(+). Under physiological conditions, G3BP1 adopts a compact state that is stabilized by intramolecular interactions between the RG-rich and the acidic regions that inhibit phase separation. Upon stress, polysomes disassemble and mRNAs are released in an unfolded protein-free state. Binding of unfolded mRNA to G3BP1 outcompetes the intramolecular interactions and RNA-bound G3BP1 adopts an expanded conformation in which the RG-rich region becomes exposed to engage in protein-protein and protein-RNA interactions, allowing physical cross-linking of RNA molecules to form protein-RNA condensates, leading to liquid-liquid phase separation (LLPS). Its function is as follows. Protein involved in various processes, such as stress granule formation and innate immunity. Plays an essential role in stress granule formation. Stress granules are membraneless compartments that store mRNAs and proteins, such as stalled translation pre-initiation complexes, in response to stress. Promotes formation of stress granules phase-separated membraneless compartment by undergoing liquid-liquid phase separation (LLPS) upon unfolded RNA-binding: functions as a molecular switch that triggers RNA-dependent LLPS in response to a rise in intracellular free RNA concentrations. Also acts as an ATP- and magnesium-dependent helicase: unwinds DNA/DNA, RNA/DNA, and RNA/RNA substrates with comparable efficiency. Acts unidirectionally by moving in the 5' to 3' direction along the bound single-stranded DNA. Unwinds preferentially partial DNA and RNA duplexes having a 17 bp annealed portion and either a hanging 3' tail or hanging tails at both 5'- and 3'-ends. Plays an essential role in innate immunity by promoting CGAS and RIGI activity. Participates in the DNA-triggered cGAS/STING pathway by promoting the DNA binding and activation of CGAS. Triggers the condensation of cGAS, a process probably linked to the formation of membrane-less organelles. Also enhances RIGI-induced type I interferon production probably by helping RIGI at sensing pathogenic RNA. May also act as a phosphorylation-dependent sequence-specific endoribonuclease in vitro: Cleaves exclusively between cytosine and adenine and cleaves MYC mRNA preferentially at the 3'-UTR. This is Ras GTPase-activating protein-binding protein 1 (G3BP1) from Bos taurus (Bovine).